The sequence spans 95 residues: Large ribosomal subunit protein bL27 (95 aa).

Residues 1-24 (MAHKKGTGSTRNGRDSNSQRLGVK) form a disordered region. The span at 7-20 (TGSTRNGRDSNSQR) shows a compositional bias: polar residues.

The protein belongs to the bacterial ribosomal protein bL27 family.

This Trichodesmium erythraeum (strain IMS101) protein is Large ribosomal subunit protein bL27.